We begin with the raw amino-acid sequence, 50 residues long: Large ribosomal subunit protein eL39 (50 aa).

This sequence belongs to the eukaryotic ribosomal protein eL39 family.

The protein is Large ribosomal subunit protein eL39 (rpl39e) of Archaeoglobus fulgidus (strain ATCC 49558 / DSM 4304 / JCM 9628 / NBRC 100126 / VC-16).